Consider the following 343-residue polypeptide: 3-hydroxy-3-methylglutaryl-CoA lyase, cytoplasmic (343 aa).

G2 is lipidated: N-myristoyl glycine. The Pyruvate carboxyltransferase domain maps to 48–315 (VKIVEVGPRD…NTGVDLYKVM (268 aa)). R56 contributes to the substrate binding site. Positions 57, 248, and 250 each coordinate a divalent metal cation. Residue C281 is part of the active site. An a divalent metal cation-binding site is contributed by N290.

The protein belongs to the HMG-CoA lyase family. A divalent metal cation serves as cofactor.

Its subcellular location is the cytoplasm. The protein resides in the cytosol. It localises to the endoplasmic reticulum membrane. It catalyses the reaction (3S)-3-hydroxy-3-methylglutaryl-CoA = acetoacetate + acetyl-CoA. Its pathway is metabolic intermediate metabolism; (S)-3-hydroxy-3-methylglutaryl-CoA degradation; acetoacetate from (S)-3-hydroxy-3-methylglutaryl-CoA: step 1/1. Its function is as follows. Non-mitochondrial 3-hydroxy-3-methylglutaryl-CoA lyase that catalyzes a cation-dependent cleavage of (S)-3-hydroxy-3-methylglutaryl-CoA into acetyl-CoA and acetoacetate, a key step in ketogenesis, the products of which support energy production in nonhepatic animal tissues. This chain is 3-hydroxy-3-methylglutaryl-CoA lyase, cytoplasmic (Hmgcll1), found in Mus musculus (Mouse).